We begin with the raw amino-acid sequence, 415 residues long: 1-deoxy-D-xylulose 5-phosphate reductoisomerase (415 aa).

Residues Thr-10, Gly-11, Ser-12, Ile-13, Gly-36, Arg-37, Asn-38, and Asn-128 each coordinate NADPH. Lys-129 contacts 1-deoxy-D-xylulose 5-phosphate. Glu-130 lines the NADPH pocket. Asp-154 is a Mn(2+) binding site. Residues Ser-155, Glu-156, Ser-192, and His-215 each contribute to the 1-deoxy-D-xylulose 5-phosphate site. Glu-156 is a Mn(2+) binding site. Residue Gly-221 participates in NADPH binding. Positions 228, 233, 234, and 237 each coordinate 1-deoxy-D-xylulose 5-phosphate. Glu-237 contributes to the Mn(2+) binding site.

The protein belongs to the DXR family. Requires Mg(2+) as cofactor. It depends on Mn(2+) as a cofactor.

It carries out the reaction 2-C-methyl-D-erythritol 4-phosphate + NADP(+) = 1-deoxy-D-xylulose 5-phosphate + NADPH + H(+). It functions in the pathway isoprenoid biosynthesis; isopentenyl diphosphate biosynthesis via DXP pathway; isopentenyl diphosphate from 1-deoxy-D-xylulose 5-phosphate: step 1/6. Its function is as follows. Catalyzes the NADPH-dependent rearrangement and reduction of 1-deoxy-D-xylulose-5-phosphate (DXP) to 2-C-methyl-D-erythritol 4-phosphate (MEP). This chain is 1-deoxy-D-xylulose 5-phosphate reductoisomerase, found in Synechococcus sp. (strain CC9605).